A 245-amino-acid polypeptide reads, in one-letter code: MGRLDGKVIVLSAAAQGIGKASAIAFAKEGAQVTATDINGEKLKELDGIPGIKTKVVDVTKKDQVDALAKDFDHVDVLFNIAGFVHHGSILDCEESDWDFTMNVNVRSMYLMIKAFLPKMLARKSGNIINMASVASSIKGVVNRCVYSTSKAAVIGLTKSVAADFLEQGIRCNCICPGTVDTPSLRERIQARPDPEQAFKDFMARQRTGRLCTAEEVAHLCVYLASDESTFVTGTEVIIDGGWRL.

Residues 16-18, Asp-37, and Asp-58 each bind NAD(+); that span reads QGI. Arg-144 serves as a coordination point for substrate. Residue Tyr-147 is the Proton acceptor of the active site. Residues Lys-151 and 180–184 contribute to the NAD(+) site; that span reads VDTPS. Substrate is bound by residues Arg-188 and Arg-205.

It belongs to the short-chain dehydrogenases/reductases (SDR) family. In terms of assembly, homotetramer.

Its subcellular location is the cytoplasm. It catalyses the reaction cis-4-hydroxy-L-proline + NAD(+) = 4-oxo-L-proline + NADH + H(+). It carries out the reaction (R)-3-hydroxybutanoate + NAD(+) = acetoacetate + NADH + H(+). It participates in amino-acid metabolism. Its pathway is siderophore biosynthesis. In terms of biological role, NAD(H)-dependent dehydrogenase/reductase with a preference for cyclic substrates. Catalyzes stereoselective conversion of 4-oxo-L-proline to cis-4-hydroxy-L-proline, likely a detoxification mechanism for ketoprolines. Mediates the formation of 2,5-dihydroxybenzoate (2,5-DHBA), a siderophore that chelates free cytoplasmic iron, thereby regulating iron transport and homeostasis while protecting cells against free radical-induced oxidative stress. The iron-siderophore complex is imported into mitochondria, providing an iron source for mitochondrial metabolic processes in particular heme synthesis. May act as a 3-hydroxybutyrate dehydrogenase. In Danio rerio (Zebrafish), this protein is Dehydrogenase/reductase SDR family member 6 (bdh2).